The sequence spans 366 residues: Chorismate synthase (366 aa).

Residues Arg48 and Arg54 each coordinate NADP(+). FMN is bound by residues 125-127, 241-242, Gly285, 300-304, and Arg326; these read RSS, NA, and KPTSS.

This sequence belongs to the chorismate synthase family. In terms of assembly, homotetramer. The cofactor is FMNH2.

It catalyses the reaction 5-O-(1-carboxyvinyl)-3-phosphoshikimate = chorismate + phosphate. It participates in metabolic intermediate biosynthesis; chorismate biosynthesis; chorismate from D-erythrose 4-phosphate and phosphoenolpyruvate: step 7/7. In terms of biological role, catalyzes the anti-1,4-elimination of the C-3 phosphate and the C-6 proR hydrogen from 5-enolpyruvylshikimate-3-phosphate (EPSP) to yield chorismate, which is the branch point compound that serves as the starting substrate for the three terminal pathways of aromatic amino acid biosynthesis. This reaction introduces a second double bond into the aromatic ring system. The sequence is that of Chorismate synthase from Cereibacter sphaeroides (strain ATCC 17023 / DSM 158 / JCM 6121 / CCUG 31486 / LMG 2827 / NBRC 12203 / NCIMB 8253 / ATH 2.4.1.) (Rhodobacter sphaeroides).